We begin with the raw amino-acid sequence, 592 residues long: Transmembrane 9 superfamily member 3 (592 aa).

A signal peptide spans 1-19 (MRLPTTLLLFIGALIFSGA). Residues 20–229 (GTVRSDASDH…SLPHHLEIHW (210 aa)) lie on the Lumenal side of the membrane. A helical transmembrane segment spans residues 230–250 (FSIINSCVTVLLLTGFLATIL). Topologically, residues 251-302 (MRVLKNDFMKYAQDEEAADDQEETGWKYIHGDVFRFPKNKSLFAASLGSGTQ) are cytoplasmic. A helical transmembrane segment spans residues 303–323 (LFTLTIFIFMLSLVGVFYPYN). At 324-325 (RG) the chain is on the lumenal side. Residues 326–346 (ALFTALVVIYALTSGIAGYTA) traverse the membrane as a helical segment. Over 347-365 (SSFYCQLEGKNWVRNLLLT) the chain is Cytoplasmic. A helical membrane pass occupies residues 366–386 (GGLFCGPLFLTFCFLNTVAIA). At 387–397 (YSATAALPFGT) the chain is on the lumenal side. Residues 398 to 418 (IIVIVLIWTLVTSPLLVLGGI) form a helical membrane-spanning segment. Residues 419-452 (AGKNSKAEFQAPVRTTKYPREIPPLPWYRSAVPQ) lie on the Cytoplasmic side of the membrane. A helical transmembrane segment spans residues 453 to 473 (MAMAGFLPFSAIYIELYYIFA). Over 474-485 (SVWGHRIYTIYS) the chain is Lumenal. A helical membrane pass occupies residues 486–506 (ILFIVFIILLIVTAFITVALT). Residues 507–521 (YFQLAAEDHEWWWRS) are Cytoplasmic-facing. A helical transmembrane segment spans residues 522 to 542 (FLCGGSTGLFIYAYCLYYYYA). Topologically, residues 543–553 (RSDMSGFMQTS) are lumenal. The chain crosses the membrane as a helical span at residues 554–574 (FFFGYMACICYGFFLMLGTVG). The Cytoplasmic segment spans residues 575-592 (FRAALLFVRHIYRSIKCE). The short motif at 581-586 (FVRHIY) is the Endoplasmic reticulum export signal element. The short motif at 590-592 (KCE) is the Golgi retention signal element.

Belongs to the nonaspanin (TM9SF) (TC 9.A.2) family.

It localises to the endosome membrane. The protein resides in the golgi apparatus membrane. This is Transmembrane 9 superfamily member 3 from Arabidopsis thaliana (Mouse-ear cress).